A 393-amino-acid polypeptide reads, in one-letter code: Pigment production hydroxylase (393 aa).

Its function is as follows. Involved in pigment production acting as a hydroxylase that transforms indole to indoxyl, resulting in the formation of indigo. The sequence is that of Pigment production hydroxylase from Rhodococcus erythropolis (Arthrobacter picolinophilus).